Consider the following 129-residue polypeptide: Thyroid hormone receptor alpha (129 aa).

Positions 26 to 129 (AEWELIRMVT…EIMSLRAAVR (104 aa)) constitute an NR LBD domain. Arginine 91 is a 3,3',5-triiodo-L-thyronine binding site.

It belongs to the nuclear hormone receptor family. NR1 subfamily.

The protein localises to the nucleus. Its function is as follows. Nuclear hormone receptor that can act as a repressor or activator of transcription. High affinity receptor for thyroid hormones, including triiodothyronine and thyroxine. The protein is Thyroid hormone receptor alpha (thra1) of Sparus aurata (Gilthead sea bream).